The chain runs to 168 residues: Ubiquitin-fold modifier-conjugating enzyme 1 (168 aa).

Residue cysteine 116 is the Glycyl thioester intermediate of the active site.

It belongs to the ubiquitin-conjugating enzyme family. UFC1 subfamily.

In terms of biological role, E2-like enzyme which forms an intermediate with UFM1 via a thioester linkage. The polypeptide is Ubiquitin-fold modifier-conjugating enzyme 1 (Trichoplax adhaerens (Trichoplax reptans)).